The chain runs to 322 residues: tRNA U34 carboxymethyltransferase (322 aa).

Carboxy-S-adenosyl-L-methionine is bound by residues K92, W106, K111, G131, 153–155, 181–182, M196, Y200, and R315; these read DPS and VE.

It belongs to the class I-like SAM-binding methyltransferase superfamily. CmoB family. As to quaternary structure, homotetramer.

It catalyses the reaction carboxy-S-adenosyl-L-methionine + 5-hydroxyuridine(34) in tRNA = 5-carboxymethoxyuridine(34) in tRNA + S-adenosyl-L-homocysteine + H(+). Catalyzes carboxymethyl transfer from carboxy-S-adenosyl-L-methionine (Cx-SAM) to 5-hydroxyuridine (ho5U) to form 5-carboxymethoxyuridine (cmo5U) at position 34 in tRNAs. The polypeptide is tRNA U34 carboxymethyltransferase (Pseudoalteromonas translucida (strain TAC 125)).